We begin with the raw amino-acid sequence, 35 residues long: IKCTLSKDCYSPCKKETGCPRAKCINRNCKCYGCS.

4 disulfides stabilise this stretch: Cys3-Cys24, Cys9-Cys29, Cys13-Cys31, and Cys19-Cys34.

It belongs to the short scorpion toxin superfamily. Potassium channel inhibitor family. Alpha-KTx 06 subfamily. As to expression, expressed by the venom gland.

It localises to the secreted. Functionally, blocks voltage-gated potassium channels rKv1.1/KCNA1 (IC(50)=13 nM), rKv1.2/KCNA2 (IC(50)=16 nM) and rKv1.3/KCNA3 (IC(50)=2 nM). The protein is Potassium channel toxin alpha-KTx 6.15 of Hemiscorpius lepturus (Scorpion).